Consider the following 65-residue polypeptide: Beta-defensin 17 (65 aa).

An N-terminal signal peptide occupies residues Met1–Gly19. Disulfide bonds link Cys35/Cys63, Cys42/Cys56, and Cys46/Cys64.

It belongs to the beta-defensin family.

It localises to the secreted. Functionally, has antibacterial activity. The polypeptide is Beta-defensin 17 (Defb17) (Rattus norvegicus (Rat)).